We begin with the raw amino-acid sequence, 138 residues long: Centromere protein S (138 aa).

N-acetylmethionine is present on M1. Residues 110 to 138 (RKAQKKKKSEDGSKNSRQPAEAGVVESEN) form a disordered region.

The protein belongs to the TAF9 family. CENP-S/MHF1 subfamily. In terms of assembly, heterodimer with CENPX, sometimes called MHF; this interaction stabilizes both partners. MHF heterodimers can assemble to form tetrameric structures. MHF also coassemble with CENPT-CENPW heterodimers at centromeres to form the tetrameric CENP-T-W-S-X complex. Forms a discrete complex with FANCM and CENPX, called FANCM-MHF; this interaction, probably mediated by direct binding between CENPS and FANCM, leads to synergistic activation of double-stranded DNA binding and strongly stimulates FANCM-mediated DNA remodeling. Recruited by FANCM to the Fanconi anemia (FA) core complex, which consists of CENPS, CENPX, FANCA, FANCB, FANCC, FANCE, FANCF, FANCG, FANCL, FANCM, FAAP24 and FAAP100. The FA core complex associates with Bloom syndrome (BLM) complex, which consists of at least BLM, DNA topoisomerase 3-alpha (TOP3A), RMI1/BLAP75, RPA1/RPA70 and RPA2/RPA32. The super complex between FA and BLM is called BRAFT. Component of the CENPA-CAD complex, composed of CENPI, CENPK, CENPL, CENPO, CENPP, CENPQ, CENPR and CENPS. The CENPA-CAD complex is probably recruited on centromeres by the CENPA-NAC complex, composed of at least CENPA, CENPC, CENPH, CENPM, CENPN, CENPT and CENPU. In terms of tissue distribution, ubiquitously expressed.

The protein localises to the nucleus. Its subcellular location is the chromosome. It localises to the centromere. It is found in the kinetochore. Its function is as follows. DNA-binding component of the Fanconi anemia (FA) core complex. Required for the normal activation of the FA pathway, leading to monoubiquitination of the FANCI-FANCD2 complex in response to DNA damage, cellular resistance to DNA cross-linking drugs, and prevention of chromosomal breakage. In complex with CENPX (MHF heterodimer), crucial cofactor for FANCM in both binding and ATP-dependent remodeling of DNA. Stabilizes FANCM. In complex with CENPX and FANCM (but not other FANC proteins), rapidly recruited to blocked forks and promotes gene conversion at blocked replication forks. In complex with CENPT, CENPW and CENPX (CENP-T-W-S-X heterotetramer), involved in the formation of a functional kinetochore outer plate, which is essential for kinetochore-microtubule attachment and faithful mitotic progression. As a component of MHF and CENP-T-W-S-X complexes, binds DNA and bends it to form a nucleosome-like structure. DNA-binding function is fulfilled in the presence of CENPX, with the following preference for DNA substates: Holliday junction &gt; double-stranded &gt; splay arm &gt; single-stranded. Does not bind DNA on its own. The chain is Centromere protein S (CENPS) from Homo sapiens (Human).